Consider the following 300-residue polypeptide: HTH-type transcriptional regulator ArgP (300 aa).

One can recognise an HTH lysR-type domain in the interval 4 to 60; sequence PDYRTLQALDAVIRERGFERAAQKLCITQSAVSQRIKQLENLFGQPLLVRTVPPRPT. Positions 21-40 form a DNA-binding region, H-T-H motif; sequence FERAAQKLCITQSAVSQRIK.

It belongs to the LysR transcriptional regulatory family. In terms of assembly, homodimer.

Its function is as follows. Controls the transcription of genes involved in arginine and lysine metabolism. This Photorhabdus laumondii subsp. laumondii (strain DSM 15139 / CIP 105565 / TT01) (Photorhabdus luminescens subsp. laumondii) protein is HTH-type transcriptional regulator ArgP.